Reading from the N-terminus, the 274-residue chain is Outer surface protein A (274 aa).

Positions 1-16 are cleaved as a signal peptide; it reads MKKYLLGIGLILALIA. Cys-17 carries N-palmitoyl cysteine lipidation. Cys-17 is lipidated: S-diacylglycerol cysteine.

This sequence belongs to the OspA lipoprotein family.

Its subcellular location is the cell outer membrane. The protein resides in the cell surface. The sequence is that of Outer surface protein A from Borreliella burgdorferi (Lyme disease spirochete).